A 194-amino-acid polypeptide reads, in one-letter code: uncharacterized protein (194 aa).

The signal sequence occupies residues 1 to 15; it reads MFVLSIALLSCTTLC. A PAN domain is found at 49–134; sequence CPQGLHADAI…KATYYEKIRC (86 aa). Disulfide bonds link C49–C134 and C79–C106.

This is an uncharacterized protein from Caenorhabditis elegans.